The primary structure comprises 178 residues: Probable coatomer subunit zeta-B (178 aa).

Belongs to the adaptor complexes small subunit family. Oligomeric complex that consists of at least the alpha, beta, beta', gamma, delta, epsilon and zeta subunits.

The protein localises to the cytoplasm. Its subcellular location is the golgi apparatus membrane. It is found in the cytoplasmic vesicle. The protein resides in the COPI-coated vesicle membrane. In terms of biological role, the coatomer is a cytosolic protein complex that binds to dilysine motifs and reversibly associates with Golgi non-clathrin-coated vesicles, which further mediate biosynthetic protein transport from the ER, via the Golgi up to the trans Golgi network. Coatomer complex is required for budding from Golgi membranes, and is essential for the retrograde Golgi-to-ER transport of dilysine-tagged proteins. The zeta subunit may be involved in regulating the coat assembly and, hence, the rate of biosynthetic protein transport due to its association-dissociation properties with the coatomer complex. This is Probable coatomer subunit zeta-B (copZb) from Dictyostelium discoideum (Social amoeba).